A 229-amino-acid polypeptide reads, in one-letter code: Putative germin-like protein 12-4 (229 aa).

An N-terminal signal peptide occupies residues 1–22 (MAASNFFLLTAFIALVATQAMA). Cys-32 and Cys-47 are oxidised to a cystine. The Cupin type-1 domain occupies 62–217 (ANLDKPMDTT…AFQVDKKAMD (156 aa)). An N-linked (GlcNAc...) asparagine glycan is attached at Asn-78. Positions 111, 113, 118, and 162 each coordinate Mn(2+).

Belongs to the germin family. As to quaternary structure, oligomer (believed to be a pentamer but probably hexamer).

It is found in the secreted. Its subcellular location is the extracellular space. The protein localises to the apoplast. Its function is as follows. May play a role in plant defense. Probably has no oxalate oxidase activity even if the active site is conserved. This Oryza sativa subsp. japonica (Rice) protein is Putative germin-like protein 12-4.